A 354-amino-acid polypeptide reads, in one-letter code: Protein RecA (354 aa).

An ATP-binding site is contributed by 67 to 74 (GPESSGKT).

The protein belongs to the RecA family.

The protein localises to the cytoplasm. Functionally, can catalyze the hydrolysis of ATP in the presence of single-stranded DNA, the ATP-dependent uptake of single-stranded DNA by duplex DNA, and the ATP-dependent hybridization of homologous single-stranded DNAs. It interacts with LexA causing its activation and leading to its autocatalytic cleavage. The sequence is that of Protein RecA from Hamiltonella defensa subsp. Acyrthosiphon pisum (strain 5AT).